The following is a 438-amino-acid chain: GTPase Der (438 aa).

EngA-type G domains lie at 4–168 (PIVA…PKGY) and 177–352 (IRIA…TNYS). Residues 10 to 17 (GRPNVGKS), 57 to 61 (DTGGI), 120 to 123 (NKID), 183 to 190 (GKPNVGKS), 230 to 234 (DTAGL), and 295 to 298 (NKWD) contribute to the GTP site. The region spanning 353 to 437 (KRISTGVLND…GIKMEFRERK (85 aa)) is the KH-like domain.

It belongs to the TRAFAC class TrmE-Era-EngA-EngB-Septin-like GTPase superfamily. EngA (Der) GTPase family. As to quaternary structure, associates with the 50S ribosomal subunit.

In terms of biological role, GTPase that plays an essential role in the late steps of ribosome biogenesis. This chain is GTPase Der, found in Clostridium tetani (strain Massachusetts / E88).